A 57-amino-acid polypeptide reads, in one-letter code: Potassium channel toxin alpha-KTx 26.1 (57 aa).

The signal sequence occupies residues M1–S22. Intrachain disulfides connect C30-C48, C34-C53, and C38-C55.

This sequence belongs to the short scorpion toxin superfamily. Potassium channel inhibitor family. Alpha-KTx 26 subfamily. Expressed by the venom gland.

It is found in the secreted. Recombinant toxin that reversibly inhibits the potassium current of mKv1.3/KCNA3 channel stably expressed in COS7 cells (IC(50)=150 nM). Also shows a weak inhibition on Kv1.2/KCNA2, Kv1.3/KCNA3 and TRPV1 channels. This chain is Potassium channel toxin alpha-KTx 26.1, found in Olivierus martensii (Manchurian scorpion).